Here is a 255-residue protein sequence, read N- to C-terminus: 4-hydroxy-tetrahydrodipicolinate reductase (255 aa).

NAD(+) contacts are provided by residues 9–14, 89–91, and 115–118; these read GFKGKM, GTT, and APNF. H145 serves as the catalytic Proton donor/acceptor. H146 is a (S)-2,3,4,5-tetrahydrodipicolinate binding site. The active-site Proton donor is the K149. Position 155-156 (155-156) interacts with (S)-2,3,4,5-tetrahydrodipicolinate; the sequence is GT.

The protein belongs to the DapB family.

Its subcellular location is the cytoplasm. It catalyses the reaction (S)-2,3,4,5-tetrahydrodipicolinate + NAD(+) + H2O = (2S,4S)-4-hydroxy-2,3,4,5-tetrahydrodipicolinate + NADH + H(+). It carries out the reaction (S)-2,3,4,5-tetrahydrodipicolinate + NADP(+) + H2O = (2S,4S)-4-hydroxy-2,3,4,5-tetrahydrodipicolinate + NADPH + H(+). It functions in the pathway amino-acid biosynthesis; L-lysine biosynthesis via DAP pathway; (S)-tetrahydrodipicolinate from L-aspartate: step 4/4. Functionally, catalyzes the conversion of 4-hydroxy-tetrahydrodipicolinate (HTPA) to tetrahydrodipicolinate. This is 4-hydroxy-tetrahydrodipicolinate reductase from Streptococcus sanguinis (strain SK36).